The following is a 169-amino-acid chain: Prolyl-tRNA synthetase associated domain-containing protein 1 (169 aa).

It belongs to the PRORSD1 family.

The sequence is that of Prolyl-tRNA synthetase associated domain-containing protein 1 (Prorsd1) from Mus musculus (Mouse).